Reading from the N-terminus, the 210-residue chain is High frequency lysogenization protein HflD homolog (210 aa).

Residues 103 to 130 (EAKAKLAERLQQIERQLPLYENDIMADQ) adopt a coiled-coil conformation.

The protein belongs to the HflD family.

It localises to the cytoplasm. It is found in the cell inner membrane. This chain is High frequency lysogenization protein HflD homolog, found in Actinobacillus pleuropneumoniae serotype 3 (strain JL03).